A 150-amino-acid chain; its full sequence is Large ribosomal subunit protein uL13 (150 aa).

The segment at 128–150 (GSDHPHSAQEPKILSLNSESVTK) is disordered.

The protein belongs to the universal ribosomal protein uL13 family. In terms of assembly, part of the 50S ribosomal subunit.

In terms of biological role, this protein is one of the early assembly proteins of the 50S ribosomal subunit, although it is not seen to bind rRNA by itself. It is important during the early stages of 50S assembly. The polypeptide is Large ribosomal subunit protein uL13 (Prochlorococcus marinus (strain NATL1A)).